The primary structure comprises 578 residues: A-type ATP synthase subunit A (578 aa).

Residue 228–235 (GPFGSGKT) coordinates ATP.

Belongs to the ATPase alpha/beta chains family. In terms of assembly, has multiple subunits with at least A(3), B(3), C, D, E, F, H, I and proteolipid K(x).

It localises to the cell membrane. It catalyses the reaction ATP + H2O + 4 H(+)(in) = ADP + phosphate + 5 H(+)(out). In terms of biological role, component of the A-type ATP synthase that produces ATP from ADP in the presence of a proton gradient across the membrane. The A chain is the catalytic subunit. This chain is A-type ATP synthase subunit A, found in Methanosarcina barkeri (strain Fusaro / DSM 804).